A 183-amino-acid polypeptide reads, in one-letter code: uncharacterized protein (183 aa).

The protein belongs to the chlamydial CPn_0803/CT_584/TC_0873 family.

This is an uncharacterized protein from Chlamydia muridarum (strain MoPn / Nigg).